Here is a 353-residue protein sequence, read N- to C-terminus: UDP-3-O-acylglucosamine N-acyltransferase (353 aa).

H242 acts as the Proton acceptor in catalysis.

It belongs to the transferase hexapeptide repeat family. LpxD subfamily. Homotrimer.

It catalyses the reaction a UDP-3-O-[(3R)-3-hydroxyacyl]-alpha-D-glucosamine + a (3R)-hydroxyacyl-[ACP] = a UDP-2-N,3-O-bis[(3R)-3-hydroxyacyl]-alpha-D-glucosamine + holo-[ACP] + H(+). The protein operates within bacterial outer membrane biogenesis; LPS lipid A biosynthesis. In terms of biological role, catalyzes the N-acylation of UDP-3-O-acylglucosamine using 3-hydroxyacyl-ACP as the acyl donor. Is involved in the biosynthesis of lipid A, a phosphorylated glycolipid that anchors the lipopolysaccharide to the outer membrane of the cell. The protein is UDP-3-O-acylglucosamine N-acyltransferase of Pseudomonas aeruginosa (strain LESB58).